A 510-amino-acid chain; its full sequence is Insulinoma-associated protein 1 (510 aa).

Residues M1 to K12 are compositionally biased toward basic residues. The tract at residues M1–V20 is SNAG domain. Disordered regions lie at residues M1–H110 and G176–I226. The required and sufficient for interaction with KDM1A stretch occupies residues P2–V7. A necessary for interaction with CCND1 region spans residues P43–P58. Over residues P43–A59 the composition is skewed to pro residues. Low complexity-rich tracts occupy residues A64–P74 and E209–P218. The C2H2-type 1; atypical zinc finger occupies F267–C287. Residues Y295 to H317 form a C2H2-type 2 zinc finger. Positions R315 to S362 are disordered. The span at P329–T351 shows a compositional bias: basic and acidic residues. 3 C2H2-type zinc fingers span residues Y367–H389, H441–H464, and F469–H492.

This sequence belongs to the INSM1 family. Interacts (via the SNAG domain) with HDAC1. Interacts (via the SNAG domain) with HDAC2. Interacts (via the SNAG domain) with KDM1A. Interacts (via the SNAG domain) with RCOR1. Interacts with SORBS1. Interacts (via the N-terminal region) with CCND1 (via cyclin N-terminal domain); the interaction competes with the binding of CCND1 to CDK4 during cell cycle progression and increases its transcriptional repressor activity. Interacts with HDAC3; the interaction increases its transcriptional repressor activity. As to expression, expressed in pancreatic duct cells. Expressed in several tumor cell lines of neuroendocrine origin including pheochromocytoma, medullary thyroid carcinoma, insulinoma, medulloblastoma, retinoblastoma, pheochromacytoma, medullary thyroid carcinoma and small cell lung carcinoma.

The protein resides in the nucleus. Its function is as follows. Sequence-specific DNA-binding transcriptional regulator that plays a key role in neurogenesis and neuroendocrine cell differentiation during embryonic and/or fetal development. Binds to the consensus sequence 5'-[TG][TC][TC][TT][GA]GGG[CG]A-3' in target promoters. Acts as a transcriptional repressor of NEUROD1 and INS expression via its interaction with cyclin CCND1 in a cell cycle-independent manner. Negatively regulates skeletal muscle-specific gene expression in endocrine cells of the pituitary by inhibiting the Notch signaling pathway. Represses target gene transcription by recruiting chromatin-modifying factors, such as HDAC1, HDAC2, HDAC3, KDM1A and RCOR1 histone deacetylases. Binds to its own promoter, suggesting autoregulation as a self-control feedback mechanism. Competes with histone H3 for the same binding site on the histone demethylase complex formed by KDM1A and RCOR1, and thereby inhibits demethylation of histone H3 at 'Lys-4'. Promotes the generation and expansion of neuronal basal progenitor cells in the developing neocortex. Involved in the differentiation of endocrine cells of the developing anterior pituitary gland, of the pancreas and intestine, and of sympatho-adrenal cells in the peripheral nervous system. Promotes cell cycle signaling arrest and inhibition of cellular proliferation. The chain is Insulinoma-associated protein 1 (INSM1) from Homo sapiens (Human).